A 161-amino-acid polypeptide reads, in one-letter code: 2-C-methyl-D-erythritol 2,4-cyclodiphosphate synthase (161 aa).

A divalent metal cation is bound by residues D14 and H16. Residues D14–H16 and H40–S41 contribute to the 4-CDP-2-C-methyl-D-erythritol 2-phosphate site. Position 48 (H48) interacts with a divalent metal cation. Residues D62 to G64, F142, and R145 each bind 4-CDP-2-C-methyl-D-erythritol 2-phosphate.

It belongs to the IspF family. As to quaternary structure, homotrimer. Requires a divalent metal cation as cofactor.

The enzyme catalyses 4-CDP-2-C-methyl-D-erythritol 2-phosphate = 2-C-methyl-D-erythritol 2,4-cyclic diphosphate + CMP. It functions in the pathway isoprenoid biosynthesis; isopentenyl diphosphate biosynthesis via DXP pathway; isopentenyl diphosphate from 1-deoxy-D-xylulose 5-phosphate: step 4/6. Its function is as follows. Involved in the biosynthesis of isopentenyl diphosphate (IPP) and dimethylallyl diphosphate (DMAPP), two major building blocks of isoprenoid compounds. Catalyzes the conversion of 4-diphosphocytidyl-2-C-methyl-D-erythritol 2-phosphate (CDP-ME2P) to 2-C-methyl-D-erythritol 2,4-cyclodiphosphate (ME-CPP) with a corresponding release of cytidine 5-monophosphate (CMP). In Acidothermus cellulolyticus (strain ATCC 43068 / DSM 8971 / 11B), this protein is 2-C-methyl-D-erythritol 2,4-cyclodiphosphate synthase.